The primary structure comprises 328 residues: Ribosomal protein L11 methyltransferase (328 aa).

Thr-153, Gly-174, Asp-196, and Asn-263 together coordinate S-adenosyl-L-methionine.

This sequence belongs to the methyltransferase superfamily. PrmA family.

It localises to the cytoplasm. It catalyses the reaction L-lysyl-[protein] + 3 S-adenosyl-L-methionine = N(6),N(6),N(6)-trimethyl-L-lysyl-[protein] + 3 S-adenosyl-L-homocysteine + 3 H(+). Methylates ribosomal protein L11. This Chloroflexus aurantiacus (strain ATCC 29366 / DSM 635 / J-10-fl) protein is Ribosomal protein L11 methyltransferase.